Here is a 156-residue protein sequence, read N- to C-terminus: Phospholipase A2 A2-hormotoxin-Apt1a (156 aa).

An N-terminal signal peptide occupies residues 1–19 (MQLYTYFFTFSLVLILALA). Positions 20-35 (DQENKSLDFTQEGGIA) are excised as a propeptide. Intrachain disulfides connect Cys-62–Cys-156, Cys-64–Cys-80, Cys-79–Cys-138, Cys-86–Cys-131, and Cys-115–Cys-129. 2 residues coordinate Ca(2+): Gly-65 and Gly-67. His-83 is an active-site residue. Residue Asp-84 participates in Ca(2+) binding. The active site involves Asp-132.

This sequence belongs to the phospholipase A2 family. Requires Ca(2+) as cofactor.

The protein resides in the secreted. The protein localises to the nematocyst. The catalysed reaction is a 1,2-diacyl-sn-glycero-3-phosphocholine + H2O = a 1-acyl-sn-glycero-3-phosphocholine + a fatty acid + H(+). Its function is as follows. Sea anemone phospholipase A2 (PLA2) that may have a role both in defense and in digestion, since its expression and enzymatic activity were found both in the acontia (defensive organs) and tentacles. PLA2 catalyzes the calcium-dependent hydrolysis of the 2-acyl groups in 3-sn-phosphoglycerides. The protein is Phospholipase A2 A2-hormotoxin-Apt1a of Adamsia palliata (Cloak anemone).